Consider the following 362-residue polypeptide: DNA polymerase IV (362 aa).

The 182-residue stretch at 6-187 folds into the UmuC domain; that stretch reads IIHVDMDAFY…LPVSSFHGVG (182 aa). D10 and D105 together coordinate Mg(2+). The active site involves E106.

It belongs to the DNA polymerase type-Y family. Monomer. Mg(2+) is required as a cofactor.

The protein localises to the cytoplasm. The enzyme catalyses DNA(n) + a 2'-deoxyribonucleoside 5'-triphosphate = DNA(n+1) + diphosphate. Poorly processive, error-prone DNA polymerase involved in untargeted mutagenesis. Copies undamaged DNA at stalled replication forks, which arise in vivo from mismatched or misaligned primer ends. These misaligned primers can be extended by PolIV. Exhibits no 3'-5' exonuclease (proofreading) activity. May be involved in translesional synthesis, in conjunction with the beta clamp from PolIII. The protein is DNA polymerase IV of Leptospira interrogans serogroup Icterohaemorrhagiae serovar copenhageni (strain Fiocruz L1-130).